A 616-amino-acid polypeptide reads, in one-letter code: Dihydroxy-acid dehydratase (616 aa).

Aspartate 81 lines the Mg(2+) pocket. Cysteine 122 serves as a coordination point for [2Fe-2S] cluster. Mg(2+) is bound by residues aspartate 123 and lysine 124. The residue at position 124 (lysine 124) is an N6-carboxylysine. Cysteine 195 lines the [2Fe-2S] cluster pocket. Glutamate 491 is a Mg(2+) binding site. The active-site Proton acceptor is the serine 517.

The protein belongs to the IlvD/Edd family. In terms of assembly, homodimer. [2Fe-2S] cluster serves as cofactor. Mg(2+) is required as a cofactor.

It carries out the reaction (2R)-2,3-dihydroxy-3-methylbutanoate = 3-methyl-2-oxobutanoate + H2O. The enzyme catalyses (2R,3R)-2,3-dihydroxy-3-methylpentanoate = (S)-3-methyl-2-oxopentanoate + H2O. It functions in the pathway amino-acid biosynthesis; L-isoleucine biosynthesis; L-isoleucine from 2-oxobutanoate: step 3/4. Its pathway is amino-acid biosynthesis; L-valine biosynthesis; L-valine from pyruvate: step 3/4. Functionally, functions in the biosynthesis of branched-chain amino acids. Catalyzes the dehydration of (2R,3R)-2,3-dihydroxy-3-methylpentanoate (2,3-dihydroxy-3-methylvalerate) into 2-oxo-3-methylpentanoate (2-oxo-3-methylvalerate) and of (2R)-2,3-dihydroxy-3-methylbutanoate (2,3-dihydroxyisovalerate) into 2-oxo-3-methylbutanoate (2-oxoisovalerate), the penultimate precursor to L-isoleucine and L-valine, respectively. This chain is Dihydroxy-acid dehydratase, found in Yersinia pseudotuberculosis serotype O:3 (strain YPIII).